The primary structure comprises 433 residues: N-lysine methyltransferase SMYD2 (433 aa).

An SET domain is found at 7 to 241; it reads GGLERFCSPG…PGEEVFTSYI (235 aa). Residue 17-19 participates in S-adenosyl-L-methionine binding; sequence KGR. Positions 52, 55, 65, 68, 74, 78, 86, and 90 each coordinate Zn(2+). The MYND-type zinc-finger motif lies at 52–90; it reads CEYCFTRKEGLSKCGRCKQAFYCNVECQKEDWPMHKLEC. S-adenosyl-L-methionine-binding positions include His-137, 206 to 207, and 258 to 260; these read NH and YFF. Position 283 is a phosphoserine (Ser-283).

This sequence belongs to the class V-like SAM-binding methyltransferase superfamily. Interacts with RNA polymerase II and HELZ. Interacts with SIN3A and HDAC1. Interacts (via MYND-type zinc finger) with EPB41L3. Interacts (via SET domain) with p53/TP53. Interacts with RB1 and HSP90AA1.

Its subcellular location is the cytoplasm. It localises to the cytosol. The protein resides in the nucleus. It carries out the reaction L-lysyl(4)-[histone H3] + 3 S-adenosyl-L-methionine = N(6),N(6),N(6)-trimethyl-L-lysyl(4)-[histone H3] + 3 S-adenosyl-L-homocysteine + 3 H(+). The catalysed reaction is L-lysyl-[protein] + S-adenosyl-L-methionine = N(6)-methyl-L-lysyl-[protein] + S-adenosyl-L-homocysteine + H(+). In terms of biological role, protein-lysine N-methyltransferase that methylates both histones and non-histone proteins, including p53/TP53 and RB1. Specifically trimethylates histone H3 'Lys-4' (H3K4me3) in vivo. The activity requires interaction with HSP90alpha. Shows even higher methyltransferase activity on p53/TP53. Monomethylates 'Lys-370' of p53/TP53, leading to decreased DNA-binding activity and subsequent transcriptional regulation activity of p53/TP53. Monomethylates RB1 at 'Lys-860'. The polypeptide is N-lysine methyltransferase SMYD2 (SMYD2) (Homo sapiens (Human)).